A 336-amino-acid chain; its full sequence is Heat-inducible transcription repressor HrcA (336 aa).

Belongs to the HrcA family.

Negative regulator of class I heat shock genes (grpE-dnaK-dnaJ and groELS operons). Prevents heat-shock induction of these operons. The protein is Heat-inducible transcription repressor HrcA of Variovorax paradoxus (strain S110).